A 291-amino-acid polypeptide reads, in one-letter code: MFSGVYTALITPFKDYKVDFDAFEKLIENQYKKGVNGIVPCGTTGESPTLSCKEHEEVIEFCVEKAKGKMKVLAGTGSNSTDEAIYFTRTAKRVGCDGVLVVSPYYNKPTQKGLYLHFKTIADTIDIPIVLYNIAGRTSINIEPATVAKLFKNCKNIIGVKEASGSLDQMSAIKSLVPDIELISGDDALTLPLLSIGGIGVISVLSNIIPTEIVSLVKTFEKGDLKEAVKIHYKLLPLVKLMFIETNPIPVKTVASLLGMCSADLRLPMCEMEEPNRLKLEKALKDFGLLK.

Thr44 lines the pyruvate pocket. The Proton donor/acceptor role is filled by Tyr132. Lys161 acts as the Schiff-base intermediate with substrate in catalysis. Ile202 contributes to the pyruvate binding site.

This sequence belongs to the DapA family. In terms of assembly, homotetramer; dimer of dimers.

It is found in the cytoplasm. The catalysed reaction is L-aspartate 4-semialdehyde + pyruvate = (2S,4S)-4-hydroxy-2,3,4,5-tetrahydrodipicolinate + H2O + H(+). Its pathway is amino-acid biosynthesis; L-lysine biosynthesis via DAP pathway; (S)-tetrahydrodipicolinate from L-aspartate: step 3/4. Its function is as follows. Catalyzes the condensation of (S)-aspartate-beta-semialdehyde [(S)-ASA] and pyruvate to 4-hydroxy-tetrahydrodipicolinate (HTPA). The protein is 4-hydroxy-tetrahydrodipicolinate synthase of Endomicrobium trichonymphae.